A 466-amino-acid polypeptide reads, in one-letter code: MFIFDSAKKIKREFIPQEQGKVSLYVCGPTVYDDAHLGHAKSALVFDLLCRVLNANGYEVTYARNITDIDDKIINRAQEQNKTIKEVTDFYTDAYHKEMALLGISRPDIEPKATESLDAMYALVQKLLDNKHAYTTDDGDVYFDTSSDSKYLTLSNRVQDESEKLQRVQSSSQKRNPADFALWKSIHDESVTFGSPFGKGRPGWHLECSAMIEKHLSKPNAKFAVDIHGGGADLLFPHHENEAAQTRCATDHALAAYWMHNGFVNIDGEKMSKSLGNSFFLKDALKIYDGEVLRFYLLSTHYRSNFNFNEEDLATAKKRLDKIYRLKKRLFGVTYEDEKTDFKKELLETLSDDLNISASLALIEEMITRANETLDTAGKHKELKREALSNLSFIEKILGFGIKNPYEYFQFGVNEETKTEIAKLIEKRAEAKKSKDFAASDMLRDKILAYGVNLMDTPQGSFWEKI.

C27 provides a ligand contact to Zn(2+). A 'HIGH' region motif is present at residues 29–39 (PTVYDDAHLGH). 3 residues coordinate Zn(2+): C208, H238, and E242. The 'KMSKS' region signature appears at 270-274 (KMSKS). Position 273 (K273) interacts with ATP.

Belongs to the class-I aminoacyl-tRNA synthetase family. Monomer. It depends on Zn(2+) as a cofactor.

Its subcellular location is the cytoplasm. It catalyses the reaction tRNA(Cys) + L-cysteine + ATP = L-cysteinyl-tRNA(Cys) + AMP + diphosphate. In Sulfurimonas denitrificans (strain ATCC 33889 / DSM 1251) (Thiomicrospira denitrificans (strain ATCC 33889 / DSM 1251)), this protein is Cysteine--tRNA ligase.